We begin with the raw amino-acid sequence, 559 residues long: Potassium-transporting ATPase potassium-binding subunit (559 aa).

The next 12 helical transmembrane spans lie at 5 to 25, 63 to 83, 131 to 151, 173 to 193, 254 to 274, 282 to 302, 327 to 347, 356 to 376, 379 to 399, 416 to 436, 483 to 503, and 525 to 545; these read GFLLLASYLLVLLVLARPLGM, LLAILLFNALGGLALFALLML, VGLTVQNFLSAATGIAVVFAL, ITLWLLLPLSLLVALFFIQQG, VQMLAIFLIPTALCFAFGEVV, AILWAMTLIFILCVAVVMWAE, FGILASSLFAVITTAASCGAV, ALGGMVPMWLMQIGEVVFGGV, GLYGMLLFVMLAVFIAGLMVG, MIALAILVTPTLVLLGTALAM, LLLAFCMLVGRFAVIIPVMAI, and ALFIGLLIGTVLLVGALTFIP.

Belongs to the KdpA family. The system is composed of three essential subunits: KdpA, KdpB and KdpC.

The protein resides in the cell inner membrane. Functionally, part of the high-affinity ATP-driven potassium transport (or Kdp) system, which catalyzes the hydrolysis of ATP coupled with the electrogenic transport of potassium into the cytoplasm. This subunit binds the periplasmic potassium ions and delivers the ions to the membrane domain of KdpB through an intramembrane tunnel. The sequence is that of Potassium-transporting ATPase potassium-binding subunit from Klebsiella pneumoniae subsp. pneumoniae (strain ATCC 700721 / MGH 78578).